The sequence spans 356 residues: Methionine import ATP-binding protein MetN 1 (356 aa).

The ABC transporter domain occupies 15–254 (IQIRALNKTY…PVQPITQELL (240 aa)). 51–58 (GKSGAGKS) provides a ligand contact to ATP.

It belongs to the ABC transporter superfamily. Methionine importer (TC 3.A.1.24) family. As to quaternary structure, the complex is composed of two ATP-binding proteins (MetN), two transmembrane proteins (MetI) and a solute-binding protein (MetQ).

It localises to the cell inner membrane. It catalyses the reaction L-methionine(out) + ATP + H2O = L-methionine(in) + ADP + phosphate + H(+). The catalysed reaction is D-methionine(out) + ATP + H2O = D-methionine(in) + ADP + phosphate + H(+). Part of the ABC transporter complex MetNIQ involved in methionine import. Responsible for energy coupling to the transport system. The polypeptide is Methionine import ATP-binding protein MetN 1 (Acinetobacter baylyi (strain ATCC 33305 / BD413 / ADP1)).